Reading from the N-terminus, the 842-residue chain is Glycogen phosphorylase, muscle form (842 aa).

N-acetylserine is present on Ser2. Ser15 carries the phosphoserine; by PHK; in form phosphorylase A modification. Asp43 and Tyr76 together coordinate AMP. Tyr204 and Tyr227 each carry phosphotyrosine. 310-319 (RRFKSSKFGC) contributes to the AMP binding site. The residue at position 430 (Ser430) is a Phosphoserine. Residue Tyr473 is modified to Phosphotyrosine. Ser514 carries the post-translational modification Phosphoserine. Lys681 carries the post-translational modification N6-(pyridoxal phosphate)lysine. Phosphoserine occurs at positions 747 and 748.

The protein belongs to the glycogen phosphorylase family. Homodimer. Homotetramer; to form the enzymatically active phosphorylase A. Pyridoxal 5'-phosphate serves as cofactor. Phosphorylation of Ser-15 converts phosphorylase B (unphosphorylated) to phosphorylase A.

The catalysed reaction is [(1-&gt;4)-alpha-D-glucosyl](n) + phosphate = [(1-&gt;4)-alpha-D-glucosyl](n-1) + alpha-D-glucose 1-phosphate. Its activity is regulated as follows. Allosterically regulated through the non-covalent binding of metabolites, being activated by AMP and inhibited by ATP, ADP, and glucose-6-phosphate. The activity is also controlled by post-translational modifications including phosphorylation. Functionally, allosteric enzyme that catalyzes the rate-limiting step in glycogen catabolism, the phosphorolytic cleavage of glycogen to produce glucose-1-phosphate, and plays a central role in maintaining cellular and organismal glucose homeostasis. In Homo sapiens (Human), this protein is Glycogen phosphorylase, muscle form.